Reading from the N-terminus, the 1461-residue chain is Formin-3 (1461 aa).

Disordered regions lie at residues methionine 1–asparagine 67 and tyrosine 431–threonine 457. Residues threonine 12–asparagine 28 are compositionally biased toward low complexity. 2 stretches are compositionally biased toward polar residues: residues glutamate 29–aspartate 53 and proline 438–threonine 457. In terms of domain architecture, GBD/FH3 spans serine 92–threonine 508. An interaction with tea4 region spans residues glutamine 137–glutamate 515. Residues glycine 540–glutamine 639 adopt a coiled-coil conformation. Residues glycine 683 to threonine 811 form a disordered region. The span at serine 700 to serine 718 shows a compositional bias: low complexity. Over residues serine 731–alanine 784 the composition is skewed to pro residues. Residues proline 801 to threonine 811 show a composition bias toward basic and acidic residues. The 413-residue stretch at leucine 845 to leucine 1257 folds into the FH2 domain. 2 disordered regions span residues alanine 1268 to lysine 1337 and glutamate 1416 to glutamine 1461. Composition is skewed to basic and acidic residues over residues lysine 1273 to aspartate 1315 and methionine 1325 to lysine 1337. Polar residues predominate over residues threonine 1445 to valine 1454.

This sequence belongs to the formin homology family. In terms of assembly, interacts with rax2, rho3 and tea4. Interacts with tea1 in the presence of tea4.

Its subcellular location is the cytoplasm. The protein localises to the cell cortex. The protein resides in the cell tip. In terms of biological role, involved in controlling polarized cell growth. Required for interphase actin cable formation and microtubule organization. The sequence is that of Formin-3 (for3) from Schizosaccharomyces pombe (strain 972 / ATCC 24843) (Fission yeast).